The following is a 424-amino-acid chain: MKFSIPPGVFDIIPTNTQEIWKSSYLWDFVERTIRKTVRDYGYQEIRTPLFERTELFQRSVGETSDIISKEMYTFEDKGGRSMSLRPEGTAPVMRSFIENQLHTIAPLQKLFYIAPMFRYERAQAGRYRQHHQFGAEAIGNSSPEQDAELIDLLYTLYKRLGLQNLSLNINSIGTISCRHTFRQALKDYLKPHLNNLSSDSQNRFETNPLRILDSKNAQDKQIVADAPSILDFLDEDSQIHFEQLKKLLKQLKIPYQVNPLLVRGLDYYNKTVFEVVVGELGAQNSIGGGGRYDGLLRELGGPDLPSIGFGTGIERIIQTMINQGIPLPSPCHPSLFLIPMGDEAKQLCFTLTHELRQQGIPTQMDFSGKKLGKVLQYADQIESTYVVVIGENELQTQEIELKELASGKKYKLTIDELAPTLKN.

The protein belongs to the class-II aminoacyl-tRNA synthetase family. Homodimer.

Its subcellular location is the cytoplasm. It carries out the reaction tRNA(His) + L-histidine + ATP = L-histidyl-tRNA(His) + AMP + diphosphate + H(+). This is Histidine--tRNA ligase from Protochlamydia amoebophila (strain UWE25).